A 570-amino-acid polypeptide reads, in one-letter code: Protein B602L (570 aa).

A run of 20 repeats spans residues 161 to 164 (CADT), 165 to 168 (NAST), 169 to 172 (SADT), 173 to 176 (NAST), 177 to 180 (CADT), 181 to 184 (NVDT), 185 to 188 (CAST), 189 to 192 (CADT), 193 to 196 (NVDT), 197 to 200 (CADT), 201 to 204 (CAST), 205 to 208 (CAST), 209 to 212 (CAST), 213 to 216 (CAST), 217 to 220 (CADT), 221 to 224 (NVDT), 225 to 228 (CADT), 229 to 232 (CVST), 233 to 236 (CAST), and 237 to 240 (CANT). The segment at 161–240 (CADTNASTSA…STCASTCANT (80 aa)) is 20 X 4 AA tandem repeats of [CNS]-[ATV]-[DNS]-T.

This sequence belongs to the asfivirus B602L family.

It localises to the host cytoplasm. Plays an essential role in the assembly of the icosahedral capsid of the virus. Allows the assembly of 3 molecules of hexon protein p72 and formation of a thermostable trimer. In African swine fever virus (isolate Tick/South Africa/Pretoriuskop Pr4/1996) (ASFV), this protein is Protein B602L.